We begin with the raw amino-acid sequence, 305 residues long: Protein MFI (305 aa).

As to quaternary structure, can homodimerize. Interacts with MFF; the interaction inhibits MFF interaction with DNM1L.

The protein localises to the cytoplasm. The protein resides in the cytosol. It is found in the mitochondrion outer membrane. Acts as an inhibitor of mitochondrial fission. Interacts with MFF and prevents DNM1L recruitment to mitochondria, promoting a more fused mitochondrial network. This chain is Protein MFI, found in Rattus norvegicus (Rat).